Here is a 169-residue protein sequence, read N- to C-terminus: Peptide deformylase 1 (169 aa).

Fe cation-binding residues include C92 and H134. Residue E135 is part of the active site. H138 serves as a coordination point for Fe cation.

The protein belongs to the polypeptide deformylase family. Requires Fe(2+) as cofactor.

It carries out the reaction N-terminal N-formyl-L-methionyl-[peptide] + H2O = N-terminal L-methionyl-[peptide] + formate. Functionally, removes the formyl group from the N-terminal Met of newly synthesized proteins. Requires at least a dipeptide for an efficient rate of reaction. N-terminal L-methionine is a prerequisite for activity but the enzyme has broad specificity at other positions. This Ralstonia nicotianae (strain ATCC BAA-1114 / GMI1000) (Ralstonia solanacearum) protein is Peptide deformylase 1.